A 284-amino-acid chain; its full sequence is Tropomyosin Pen a 1.0102 (284 aa).

The segment at 1-51 (MDAIKKKMQAMKLEKDNAMDRADTLEQQNKEANNRAEKSEEEVHNLQKRMQ) is disordered. A coiled-coil region spans residues 1–273 (MDAIKKKMQA…KEKYKSITDE (273 aa)). The span at 12–45 (KLEKDNAMDRADTLEQQNKEANNRAEKSEEEVHN) shows a compositional bias: basic and acidic residues. IgE-binding regions lie at residues 43–57 (VHNLQKRMQQLENDL), 85–105 (VAALNRRIQLLEEDLERSEER), 133–153 (RSLSDEERMDALENQLKEARF), 187–202 (ESKIVELEEELRVVGN), 247–284 (QKLQKEVDRLEDELVNEKEKYKSITDELDQTFSELSGY), 249–260 (LQKEVDRLEDEL), and 266–281 (KYKSITDELDQTFSEL).

This sequence belongs to the tropomyosin family. In terms of assembly, homodimer.

Its function is as follows. Tropomyosin, in association with the troponin complex, plays a central role in the calcium dependent regulation of muscle contraction. The chain is Tropomyosin Pen a 1.0102 from Penaeus aztecus (Brown shrimp).